Consider the following 590-residue polypeptide: Arginine--tRNA ligase (590 aa).

A 'HIGH' region motif is present at residues 138 to 148 (ANPTGPLHIGH).

Belongs to the class-I aminoacyl-tRNA synthetase family. Monomer.

Its subcellular location is the cytoplasm. The catalysed reaction is tRNA(Arg) + L-arginine + ATP = L-arginyl-tRNA(Arg) + AMP + diphosphate. This Orientia tsutsugamushi (strain Boryong) (Rickettsia tsutsugamushi) protein is Arginine--tRNA ligase.